Here is a 335-residue protein sequence, read N- to C-terminus: Tryptophan--tRNA ligase (335 aa).

ATP is bound by residues 13-15 (QPS) and 21-22 (GN). The 'HIGH' region signature appears at 14-22 (PSGELTIGN). An L-tryptophan-binding site is contributed by Asp-138. ATP-binding positions include 150-152 (GKD), Ile-189, and 198-202 (KMSKS). The 'KMSKS' region signature appears at 198–202 (KMSKS).

It belongs to the class-I aminoacyl-tRNA synthetase family. Homodimer.

The protein resides in the cytoplasm. The enzyme catalyses tRNA(Trp) + L-tryptophan + ATP = L-tryptophyl-tRNA(Trp) + AMP + diphosphate + H(+). In terms of biological role, catalyzes the attachment of tryptophan to tRNA(Trp). The chain is Tryptophan--tRNA ligase from Clostridium acetobutylicum (strain ATCC 824 / DSM 792 / JCM 1419 / IAM 19013 / LMG 5710 / NBRC 13948 / NRRL B-527 / VKM B-1787 / 2291 / W).